We begin with the raw amino-acid sequence, 55 residues long: MLYWALVFLVVAIIAGALGFGGIAGASAGIAQILFYIFLILLVVSLLFGLFRRAR.

The next 2 helical transmembrane spans lie at 4 to 24 and 30 to 50; these read WALVFLVVAIIAGALGFGGIA and IAQILFYIFLILLVVSLLFGL.

This sequence belongs to the UPF0391 family.

Its subcellular location is the cell membrane. The protein is UPF0391 membrane protein Meso_3110 of Chelativorans sp. (strain BNC1).